A 1066-amino-acid chain; its full sequence is Carbamoyl phosphate synthase large chain (1066 aa).

Residues 1–401 (MPKNNNIKKV…ALMKAVRSLE (401 aa)) form a carboxyphosphate synthetic domain region. ATP is bound by residues Arg-129, Arg-169, Gly-175, Gly-176, Arg-208, Ile-210, Glu-215, Gly-241, Val-242, His-243, Gln-284, and Glu-298. Positions 133-327 (KNTMEKIGEP…IAKVAAKIAL (195 aa)) constitute an ATP-grasp 1 domain. Residues Gln-284, Glu-298, and Asn-300 each coordinate Mg(2+). Positions 284, 298, and 300 each coordinate Mn(2+). An oligomerization domain region spans residues 402-547 (QNIYSMNYGD…YSCFDSENEV (146 aa)). The carbamoyl phosphate synthetic domain stretch occupies residues 548–931 (DATKTKKKVL…ALYKAFLGAG (384 aa)). The 191-residue stretch at 673 to 863 (DEILEKCCIP…IVSLASKAVL (191 aa)) folds into the ATP-grasp 2 domain. 10 residues coordinate ATP: Arg-709, Lys-748, Leu-750, Glu-754, Gly-779, Ile-780, His-781, Ser-782, Gln-822, and Glu-834. Mg(2+)-binding residues include Gln-822, Glu-834, and Asn-836. Residues Gln-822, Glu-834, and Asn-836 each coordinate Mn(2+). Positions 932–1066 (INLPKHKKMI…ELSLIDIARI (135 aa)) constitute an MGS-like domain. Residues 932–1066 (INLPKHKKMI…ELSLIDIARI (135 aa)) are allosteric domain.

Belongs to the CarB family. Composed of two chains; the small (or glutamine) chain promotes the hydrolysis of glutamine to ammonia, which is used by the large (or ammonia) chain to synthesize carbamoyl phosphate. Tetramer of heterodimers (alpha,beta)4. The cofactor is Mg(2+). It depends on Mn(2+) as a cofactor.

The enzyme catalyses hydrogencarbonate + L-glutamine + 2 ATP + H2O = carbamoyl phosphate + L-glutamate + 2 ADP + phosphate + 2 H(+). The catalysed reaction is hydrogencarbonate + NH4(+) + 2 ATP = carbamoyl phosphate + 2 ADP + phosphate + 2 H(+). The protein operates within amino-acid biosynthesis; L-arginine biosynthesis; carbamoyl phosphate from bicarbonate: step 1/1. It participates in pyrimidine metabolism; UMP biosynthesis via de novo pathway; (S)-dihydroorotate from bicarbonate: step 1/3. Its function is as follows. Large subunit of the glutamine-dependent carbamoyl phosphate synthetase (CPSase). CPSase catalyzes the formation of carbamoyl phosphate from the ammonia moiety of glutamine, carbonate, and phosphate donated by ATP, constituting the first step of 2 biosynthetic pathways, one leading to arginine and/or urea and the other to pyrimidine nucleotides. The large subunit (synthetase) binds the substrates ammonia (free or transferred from glutamine from the small subunit), hydrogencarbonate and ATP and carries out an ATP-coupled ligase reaction, activating hydrogencarbonate by forming carboxy phosphate which reacts with ammonia to form carbamoyl phosphate. The polypeptide is Carbamoyl phosphate synthase large chain (Lachnoclostridium phytofermentans (strain ATCC 700394 / DSM 18823 / ISDg) (Clostridium phytofermentans)).